We begin with the raw amino-acid sequence, 420 residues long: UDP-N-acetyl-D-mannosamine dehydrogenase (420 aa).

NAD(+) contacts are provided by Tyr-13, Ile-14, Asp-33, Thr-85, and Thr-126. The UDP-N-acetyl-alpha-D-mannosaminouronate site is built by Arg-160, Val-161, Lys-212, Asn-216, Arg-219, His-250, Arg-252, and Gly-263. Catalysis depends on Lys-212, which acts as the Proton donor/acceptor. The active-site Nucleophile is the Cys-266. Positions 330 and 331 each coordinate UDP-N-acetyl-alpha-D-mannosaminouronate. Arg-338 lines the NAD(+) pocket. Residue Lys-416 coordinates UDP-N-acetyl-alpha-D-mannosaminouronate.

Belongs to the UDP-glucose/GDP-mannose dehydrogenase family. WecC subfamily. In terms of assembly, homodimer.

It catalyses the reaction UDP-N-acetyl-alpha-D-mannosamine + 2 NAD(+) + H2O = UDP-N-acetyl-alpha-D-mannosaminouronate + 2 NADH + 3 H(+). The protein operates within bacterial outer membrane biogenesis; enterobacterial common antigen biosynthesis. Catalyzes the four-electron oxidation of UDP-N-acetyl-D-mannosamine (UDP-ManNAc), reducing NAD(+) and releasing UDP-N-acetylmannosaminuronic acid (UDP-ManNAcA). In Salmonella typhi, this protein is UDP-N-acetyl-D-mannosamine dehydrogenase.